Here is a 501-residue protein sequence, read N- to C-terminus: GMP synthase [glutamine-hydrolyzing] (501 aa).

Residues 1-185 (MVLVVDYGSQ…LFNVCKLEKN (185 aa)) enclose the Glutamine amidotransferase type-1 domain. The active-site Nucleophile is cysteine 75. Catalysis depends on residues histidine 159 and glutamate 161. One can recognise a GMPS ATP-PPase domain in the interval 186–376 (WKIGDLVEEK…LGIPDRIINR (191 aa)). 213–219 (SGGVDSS) provides a ligand contact to ATP.

As to quaternary structure, homodimer.

The catalysed reaction is XMP + L-glutamine + ATP + H2O = GMP + L-glutamate + AMP + diphosphate + 2 H(+). The protein operates within purine metabolism; GMP biosynthesis; GMP from XMP (L-Gln route): step 1/1. Its function is as follows. Catalyzes the synthesis of GMP from XMP. This Thermotoga petrophila (strain ATCC BAA-488 / DSM 13995 / JCM 10881 / RKU-1) protein is GMP synthase [glutamine-hydrolyzing].